The chain runs to 144 residues: Large ribosomal subunit protein uL16 (144 aa).

The span at 1-16 (MLQPKKTKFRRQQKGR) shows a compositional bias: basic residues. Residues 1–22 (MLQPKKTKFRRQQKGRMKGEAQ) are disordered.

It belongs to the universal ribosomal protein uL16 family. In terms of assembly, part of the 50S ribosomal subunit.

Binds 23S rRNA and is also seen to make contacts with the A and possibly P site tRNAs. This is Large ribosomal subunit protein uL16 from Parabacteroides distasonis (strain ATCC 8503 / DSM 20701 / CIP 104284 / JCM 5825 / NCTC 11152).